The following is a 425-amino-acid chain: MAGPTLLKESGPREVFCGLTSIVWLHRRMPDAFFLVVGSRTCAHLIQSAAGVMIFAEPRFGTAILSERDLAGLADAHDELDRVCKELLQRRPEIRTLFLVGSCPSEVIKLDLARAAERLNEELSGQVRVVNYSGSGIETTFTQGEDGALAALVPLLPASDERQLLLVGTLADAVEDRQMHLFQRMGIETIRSLPPRQSTDLPAVGAGTTVLLTQPFLTETARLLGDRGARVLTAPFPLGAEGSRRWMEAAADAFHLPDERVAAVLDPLVERAQSALARHRAVLEGKRIFLLPESQLELPLARFLHRECGMQLVEVGTPYLNREQMAAELDLLPDDVPVMEGQHVEQQLDRVRASQPDLVVCGMGLANPLEAEGIATKWSIELVFSPIHGIDQAGDLAELFSRPLRRRQLIRPGLHPSSLDPTVHA.

Cysteine 17, cysteine 42, and cysteine 103 together coordinate [4Fe-4S] cluster.

The protein belongs to the BchN/ChlN family. In terms of assembly, protochlorophyllide reductase is composed of three subunits; ChlL, ChlN and ChlB. Forms a heterotetramer of two ChlB and two ChlN subunits. Requires [4Fe-4S] cluster as cofactor.

It carries out the reaction chlorophyllide a + oxidized 2[4Fe-4S]-[ferredoxin] + 2 ADP + 2 phosphate = protochlorophyllide a + reduced 2[4Fe-4S]-[ferredoxin] + 2 ATP + 2 H2O. The protein operates within porphyrin-containing compound metabolism; chlorophyll biosynthesis (light-independent). Functionally, component of the dark-operative protochlorophyllide reductase (DPOR) that uses Mg-ATP and reduced ferredoxin to reduce ring D of protochlorophyllide (Pchlide) to form chlorophyllide a (Chlide). This reaction is light-independent. The NB-protein (ChlN-ChlB) is the catalytic component of the complex. This Synechococcus sp. (strain CC9605) protein is Light-independent protochlorophyllide reductase subunit N.